The sequence spans 336 residues: Dihydroorotate dehydrogenase (quinone) (336 aa).

FMN-binding positions include 62–66 (AGLDK) and T86. K66 contributes to the substrate binding site. 111–115 (NRMGF) contacts substrate. FMN-binding residues include N139 and N172. Substrate is bound at residue N172. The active-site Nucleophile is S175. Residue N177 participates in substrate binding. K217 and T245 together coordinate FMN. 246–247 (NT) lines the substrate pocket. FMN contacts are provided by residues G268, G297, and 318-319 (YS).

The protein belongs to the dihydroorotate dehydrogenase family. Type 2 subfamily. Monomer. FMN serves as cofactor.

It is found in the cell membrane. It catalyses the reaction (S)-dihydroorotate + a quinone = orotate + a quinol. It participates in pyrimidine metabolism; UMP biosynthesis via de novo pathway; orotate from (S)-dihydroorotate (quinone route): step 1/1. Its function is as follows. Catalyzes the conversion of dihydroorotate to orotate with quinone as electron acceptor. The sequence is that of Dihydroorotate dehydrogenase (quinone) from Pectobacterium atrosepticum (strain SCRI 1043 / ATCC BAA-672) (Erwinia carotovora subsp. atroseptica).